The following is a 691-amino-acid chain: DNA ligase (691 aa).

The tract at residues 1-22 (MTTAEDVAGNPYISDPRTDFES) is disordered. NAD(+) contacts are provided by residues 59–63 (DRAYD), 107–108 (SI), and Glu137. Catalysis depends on Lys139, which acts as the N6-AMP-lysine intermediate. Arg160, Glu196, Lys311, and Lys335 together coordinate NAD(+). Positions 426, 429, 442, and 448 each coordinate Zn(2+). The BRCT domain maps to 608-691 (TDGDALDGQT…EELLDDAGVL (84 aa)). The segment at 637–667 (ERNDGSATSSVSGNTDYLVLGDNPGQRKQDD) is disordered. Residues 641 to 651 (GSATSSVSGNT) are compositionally biased toward polar residues.

The protein belongs to the NAD-dependent DNA ligase family. LigA subfamily. Requires Mg(2+) as cofactor. It depends on Mn(2+) as a cofactor.

The catalysed reaction is NAD(+) + (deoxyribonucleotide)n-3'-hydroxyl + 5'-phospho-(deoxyribonucleotide)m = (deoxyribonucleotide)n+m + AMP + beta-nicotinamide D-nucleotide.. In terms of biological role, DNA ligase that catalyzes the formation of phosphodiester linkages between 5'-phosphoryl and 3'-hydroxyl groups in double-stranded DNA using NAD as a coenzyme and as the energy source for the reaction. It is essential for DNA replication and repair of damaged DNA. In Haloarcula marismortui (strain ATCC 43049 / DSM 3752 / JCM 8966 / VKM B-1809) (Halobacterium marismortui), this protein is DNA ligase.